A 652-amino-acid polypeptide reads, in one-letter code: Forkhead box protein O1-A (652 aa).

Disordered regions lie at residues 1–57 (MADA…EPSS), 208–277 (SSWW…NSHS), and 359–406 (NLLS…QQTQ). Over residues 41–57 (DSNTSSPAPSVKQEPSS) the composition is skewed to polar residues. Residues 134 to 228 (WGNMSYADLI…KSGKSPRRRA (95 aa)) constitute a DNA-binding region (fork-head). Basic residues predominate over residues 238–249 (AKSRGRAAKKKL). Residues 362-397 (SPKNPSTGGPGSGSNQSSPSSLMQASPGYSPYSSPG) show a composition bias toward low complexity.

Its subcellular location is the cytoplasm. The protein resides in the nucleus. Transcription factor that regulates metabolic homeostasis in response to oxidative stress. Binds to the consensus sequence 5'-TT[G/A]TTTTG-3' and the related Daf-16 family binding element (DBE) with consensus sequence 5'-TT[G/A]TTTAC-3'. Main regulator of redox balance and osteoblast numbers and controls bone mass. Orchestrates the endocrine function of the skeleton in regulating glucose metabolism. May be involved in regulating cellular homeostasis in the eye. May act as a positive regulator of apoptosis in cardiac smooth muscle cells as a result of its transcriptional activation of pro-apoptotic genes. The chain is Forkhead box protein O1-A (foxo1a) from Danio rerio (Zebrafish).